Consider the following 411-residue polypeptide: Arginine deiminase (411 aa).

Cys-401 functions as the Amidino-cysteine intermediate in the catalytic mechanism.

It belongs to the arginine deiminase family.

It localises to the cytoplasm. It carries out the reaction L-arginine + H2O = L-citrulline + NH4(+). Its pathway is amino-acid degradation; L-arginine degradation via ADI pathway; carbamoyl phosphate from L-arginine: step 1/2. The protein is Arginine deiminase of Streptococcus equi subsp. zooepidemicus (strain H70).